Reading from the N-terminus, the 236-residue chain is Thiamine-phosphate synthase (236 aa).

4-amino-2-methyl-5-(diphosphooxymethyl)pyrimidine is bound by residues 57–61 (QLRDK) and Asn-89. Positions 90 and 109 each coordinate Mg(2+). Ser-128 serves as a coordination point for 4-amino-2-methyl-5-(diphosphooxymethyl)pyrimidine. 154–156 (TPS) is a binding site for 2-[(2R,5Z)-2-carboxy-4-methylthiazol-5(2H)-ylidene]ethyl phosphate. Lys-157 provides a ligand contact to 4-amino-2-methyl-5-(diphosphooxymethyl)pyrimidine. Residues Gly-185 and 205–206 (IS) each bind 2-[(2R,5Z)-2-carboxy-4-methylthiazol-5(2H)-ylidene]ethyl phosphate.

It belongs to the thiamine-phosphate synthase family. It depends on Mg(2+) as a cofactor.

It carries out the reaction 2-[(2R,5Z)-2-carboxy-4-methylthiazol-5(2H)-ylidene]ethyl phosphate + 4-amino-2-methyl-5-(diphosphooxymethyl)pyrimidine + 2 H(+) = thiamine phosphate + CO2 + diphosphate. It catalyses the reaction 2-(2-carboxy-4-methylthiazol-5-yl)ethyl phosphate + 4-amino-2-methyl-5-(diphosphooxymethyl)pyrimidine + 2 H(+) = thiamine phosphate + CO2 + diphosphate. The catalysed reaction is 4-methyl-5-(2-phosphooxyethyl)-thiazole + 4-amino-2-methyl-5-(diphosphooxymethyl)pyrimidine + H(+) = thiamine phosphate + diphosphate. The protein operates within cofactor biosynthesis; thiamine diphosphate biosynthesis; thiamine phosphate from 4-amino-2-methyl-5-diphosphomethylpyrimidine and 4-methyl-5-(2-phosphoethyl)-thiazole: step 1/1. Condenses 4-methyl-5-(beta-hydroxyethyl)thiazole monophosphate (THZ-P) and 2-methyl-4-amino-5-hydroxymethyl pyrimidine pyrophosphate (HMP-PP) to form thiamine monophosphate (TMP). This is Thiamine-phosphate synthase from Roseiflexus sp. (strain RS-1).